The sequence spans 144 residues: Cytochrome c3 (144 aa).

Residues 1 to 24 form the signal peptide; the sequence is MRYLVISLFAVSLLMAGSALVGNA. H51, H54, C59, C62, H63, H64, C76, C81, H82, H100, C108, C111, H112, C125, C128, and H129 together coordinate heme c.

The protein belongs to the cytochrome c family. Homodimer. Heterotrimer of cytochrome c3 FDH2C and formate dehydrogenase FDH2 alpha and beta subunits that forms the FdhABC(3) complex. Post-translationally, binds 4 heme c groups per subunit.

The protein localises to the periplasm. Its function is as follows. Participates in sulfate respiration coupled with phosphorylation by transferring electrons from the enzyme dehydrogenase to ferredoxin. Gamma chain of the formate dehydrogenase (FDH) that catalyzes the reversible two-electron oxidation of formate to carbon dioxide. The gamma subunit of formate dehydrogenase forms a c-type heme. The polypeptide is Cytochrome c3 (Nitratidesulfovibrio vulgaris (strain ATCC 29579 / DSM 644 / CCUG 34227 / NCIMB 8303 / VKM B-1760 / Hildenborough) (Desulfovibrio vulgaris)).